Here is a 270-residue protein sequence, read N- to C-terminus: MSTLDLNHLADLYDRKDWNACKKELLKLKVELAKQNLFVPTSDKEKASFARNVFEYGVLVSIQTCDIESFARYASQVIPFYHDSLVPSSRMGLVTGLNLLYLLSENRIAEFHTALESVPDKSLFERDPYVEWVISLEQNVMEGAFDKVASMIRSCNFPEFSYFMKIVMSMVRNEIATCAEKVYSEIPLSNATSLLYLENTKETEKLAEERGWDIRDGVIYFPKEANALETEDGMLIDEEDELELPPTASKHTISSIRQLLSYTSELEQIV.

In terms of domain architecture, PCI spans 65–237 (CDIESFARYA…LETEDGMLID (173 aa)).

This sequence belongs to the proteasome subunit S14 family.

Functionally, acts as a regulatory subunit of the 26S proteasome which is involved in the ATP-dependent degradation of ubiquitinated proteins. This chain is 26S proteasome regulatory subunit rpn12 (rpn12), found in Schizosaccharomyces pombe (strain 972 / ATCC 24843) (Fission yeast).